We begin with the raw amino-acid sequence, 159 residues long: Putative transmembrane protein ORF159 (159 aa).

Helical transmembrane passes span 20 to 40 (LLLS…LSLF) and 59 to 79 (IIAV…GFCC). The Cell attachment site motif lies at 106 to 108 (RGD).

It is found in the host membrane. This chain is Putative transmembrane protein ORF159, found in Acidianus sp. F28 (AFV-2).